Consider the following 391-residue polypeptide: Nuclear hormone receptor family member nhr-115 (391 aa).

Residues 5-77 (LFPCQICGQN…IGMDASKFQY (73 aa)) constitute a DNA-binding region (nuclear receptor). Residues 8-28 (CQICGQNSHGTHFGIVSCRAC) form an NR C4-type zinc finger. The NR C4-type; atypical zinc finger occupies 41–65 (ARKGCLTNFKDKGSCFCKPCRLRKC). One can recognise an NR LBD domain in the interval 130–388 (YLDHGCETPI…FSHPEMFDDS (259 aa)).

The protein belongs to the nuclear hormone receptor family.

The protein localises to the nucleus. Functionally, orphan nuclear receptor. In Caenorhabditis elegans, this protein is Nuclear hormone receptor family member nhr-115 (nhr-115).